The primary structure comprises 333 residues: 5-formaminoimidazole-4-carboxamide-1-(beta)-D-ribofuranosyl 5'-monophosphate synthetase (333 aa).

5-amino-1-(5-phospho-beta-D-ribosyl)imidazole-4-carboxamide contacts are provided by His-9 and Ser-73. The ATP-grasp domain maps to 94–324; that stretch reads RNLFEWEANQ…ISREIKLAIN (231 aa). ATP-binding positions include 124–184 and Glu-206; that span reads PEDI…VPMY. Asn-230 provides a ligand contact to 5-amino-1-(5-phospho-beta-D-ribosyl)imidazole-4-carboxamide. Residues Glu-269 and Glu-282 each contribute to the Mg(2+) site.

This sequence belongs to the phosphohexose mutase family. It depends on Mg(2+) as a cofactor. Mn(2+) serves as cofactor.

The catalysed reaction is 5-amino-1-(5-phospho-beta-D-ribosyl)imidazole-4-carboxamide + formate + ATP = 5-formamido-1-(5-phospho-D-ribosyl)imidazole-4-carboxamide + ADP + phosphate. The protein operates within purine metabolism; IMP biosynthesis via de novo pathway; 5-formamido-1-(5-phospho-D-ribosyl)imidazole-4-carboxamide from 5-amino-1-(5-phospho-D-ribosyl)imidazole-4-carboxamide (formate route): step 1/1. Catalyzes the ATP- and formate-dependent formylation of 5-aminoimidazole-4-carboxamide-1-beta-d-ribofuranosyl 5'-monophosphate (AICAR) to 5-formaminoimidazole-4-carboxamide-1-beta-d-ribofuranosyl 5'-monophosphate (FAICAR) in the absence of folates. The sequence is that of 5-formaminoimidazole-4-carboxamide-1-(beta)-D-ribofuranosyl 5'-monophosphate synthetase from Sulfurisphaera tokodaii (strain DSM 16993 / JCM 10545 / NBRC 100140 / 7) (Sulfolobus tokodaii).